The chain runs to 104 residues: UPF0045 protein YqgV (104 aa).

It belongs to the UPF0045 family.

This Bacillus subtilis (strain 168) protein is UPF0045 protein YqgV (yqgV).